A 407-amino-acid chain; its full sequence is Arginine deiminase (407 aa).

Cysteine 397 (amidino-cysteine intermediate) is an active-site residue.

It belongs to the arginine deiminase family.

The protein resides in the cytoplasm. The enzyme catalyses L-arginine + H2O = L-citrulline + NH4(+). The protein operates within amino-acid degradation; L-arginine degradation via ADI pathway; carbamoyl phosphate from L-arginine: step 1/2. This chain is Arginine deiminase, found in Salmonella arizonae (strain ATCC BAA-731 / CDC346-86 / RSK2980).